Here is a 166-residue protein sequence, read N- to C-terminus: NADH-quinone oxidoreductase subunit B 1 (166 aa).

4 residues coordinate [4Fe-4S] cluster: cysteine 39, cysteine 40, cysteine 106, and cysteine 135.

It belongs to the complex I 20 kDa subunit family. NDH-1 is composed of 14 different subunits. Subunits NuoB, C, D, E, F, and G constitute the peripheral sector of the complex. [4Fe-4S] cluster is required as a cofactor.

It is found in the cell membrane. The enzyme catalyses a quinone + NADH + 5 H(+)(in) = a quinol + NAD(+) + 4 H(+)(out). NDH-1 shuttles electrons from NADH, via FMN and iron-sulfur (Fe-S) centers, to quinones in the respiratory chain. The immediate electron acceptor for the enzyme in this species is believed to be a menaquinone. Couples the redox reaction to proton translocation (for every two electrons transferred, four hydrogen ions are translocated across the cytoplasmic membrane), and thus conserves the redox energy in a proton gradient. The chain is NADH-quinone oxidoreductase subunit B 1 from Symbiobacterium thermophilum (strain DSM 24528 / JCM 14929 / IAM 14863 / T).